The following is a 177-amino-acid chain: Meiotic chromosome segregation protein C17A2.07c (177 aa).

Residues 71 to 90 (EDDSINKPTEEADEAPRTQL) are disordered. Residues 74–86 (SINKPTEEADEAP) show a composition bias toward basic and acidic residues.

It localises to the nucleus. In terms of biological role, involved in meiotic chromosome segregation. The chain is Meiotic chromosome segregation protein C17A2.07c from Schizosaccharomyces pombe (strain 972 / ATCC 24843) (Fission yeast).